The sequence spans 229 residues: Heptaprenylglyceryl phosphate synthase (229 aa).

A sn-glycerol 1-phosphate-binding site is contributed by lysine 12. 2 residues coordinate Mg(2+): aspartate 14 and serine 40. Sn-glycerol 1-phosphate contacts are provided by residues 159–164 (YLEYSG), glycine 189, and 209–210 (GN).

Belongs to the GGGP/HepGP synthase family. Group I subfamily. In terms of assembly, homodimer. It depends on Mg(2+) as a cofactor.

The catalysed reaction is sn-glycerol 1-phosphate + all-trans-heptaprenyl diphosphate = 3-heptaprenyl-sn-glycero-1-phosphate + diphosphate. It participates in membrane lipid metabolism; glycerophospholipid metabolism. Its function is as follows. Prenyltransferase that catalyzes in vivo the transfer of the heptaprenyl moiety of heptaprenyl pyrophosphate (HepPP; 35 carbon atoms) to the C3 hydroxyl of sn-glycerol-1-phosphate (G1P), producing heptaprenylglyceryl phosphate (HepGP). This reaction is an ether-bond-formation step in the biosynthesis of archaea-type G1P-based membrane lipids found in Bacillales. The chain is Heptaprenylglyceryl phosphate synthase from Bacillus cereus (strain AH187).